The chain runs to 329 residues: Helicase VP6-A (329 aa).

Disordered stretches follow at residues Ile27–Gly130 and Asp189–Pro232. 3 stretches are compositionally biased toward basic and acidic residues: residues Glu36–Glu58, Gly65–Ile83, and Ser96–Gly109. Position 110 (Lys110) interacts with ATP. Gly residues predominate over residues Lys110–Gly129. 2 stretches are compositionally biased toward basic and acidic residues: residues Asp189–Gly207 and His215–Pro232.

This sequence belongs to the reoviruses VP6 family. Homohexamer.

The protein resides in the virion. The enzyme catalyses ATP + H2O = ADP + phosphate + H(+). Functionally, ATP dependent RNA helicase essential for RNA packaging and viral transcription. Possesses ss- and dsRNA-binding capacity. In Antilocapra americana (Pronghorn), this protein is Helicase VP6-A (Segment-9).